The chain runs to 405 residues: Probable glucan 1,3-beta-glucosidase A (405 aa).

A signal peptide spans 1–26; sequence MFPRISQAAILAHSLLAVCTSAATLA. The Proton donor role is filled by glutamate 198. Cystine bridges form between cysteine 278-cysteine 403 and cysteine 304-cysteine 330. Residue glutamate 296 is the Nucleophile of the active site.

This sequence belongs to the glycosyl hydrolase 5 (cellulase A) family. In terms of assembly, monomer. Mn(2+) is required as a cofactor.

It is found in the secreted. It carries out the reaction Successive hydrolysis of beta-D-glucose units from the non-reducing ends of (1-&gt;3)-beta-D-glucans, releasing alpha-glucose.. In terms of biological role, beta-glucanases participate in the metabolism of beta-glucan, the main structural component of the cell wall. It could also function biosynthetically as a transglycosylase. The sequence is that of Probable glucan 1,3-beta-glucosidase A (exgA) from Emericella nidulans (strain FGSC A4 / ATCC 38163 / CBS 112.46 / NRRL 194 / M139) (Aspergillus nidulans).